We begin with the raw amino-acid sequence, 522 residues long: Glutathione reductase, mitochondrial (522 aa).

The transit peptide at 1-43 (MALLPRALSSGGRPSWRRAARASRGFPLPLPFPAAATHALSRA) directs the protein to the mitochondrion. Positions 74 and 75 each coordinate FAD. Position 74 (Ser74) interacts with glutathione. Arg81 contacts glutathione. Glu94 provides a ligand contact to FAD. At Lys97 the chain carries N6-acetyllysine. Thr101, Cys102, and Lys110 together coordinate FAD. Cys102 and Cys107 are joined by a disulfide. Tyr158 serves as a coordination point for glutathione. Ala174 contributes to the FAD binding site. NADP(+) contacts are provided by Ala239, Ile242, Glu245, Arg262, Arg268, and Gly334. Asp375 provides a ligand contact to FAD. Leu381 contributes to the NADP(+) binding site. Thr383 contributes to the FAD binding site. A glutathione-binding site is contributed by Arg391. Val414 is a binding site for NADP(+). His511 contacts FAD. The active-site Proton acceptor is His511.

It belongs to the class-I pyridine nucleotide-disulfide oxidoreductase family. Homodimer; disulfide-linked. FAD serves as cofactor.

It is found in the mitochondrion. The protein resides in the cytoplasm. The catalysed reaction is 2 glutathione + NADP(+) = glutathione disulfide + NADPH + H(+). Catalyzes the reduction of glutathione disulfide (GSSG) to reduced glutathione (GSH). Constitutes the major mechanism to maintain a high GSH:GSSG ratio in the cytosol. The protein is Glutathione reductase, mitochondrial (GSR) of Callithrix jacchus (White-tufted-ear marmoset).